A 239-amino-acid chain; its full sequence is Ribonuclease Le2 (239 aa).

Intrachain disulfides connect C5-C22, C13-C58, C21-C126, C66-C118, and C191-C225. Active-site residues include H51, E111, and H115.

Belongs to the RNase T2 family.

It catalyses the reaction a ribonucleotidyl-ribonucleotide-RNA + H2O = a 3'-end 3'-phospho-ribonucleotide-RNA + a 5'-end dephospho-ribonucleoside-RNA + H(+). This is a base non-specific and adenylic acid preferential ribonuclease. This is Ribonuclease Le2 from Lentinula edodes (Shiitake mushroom).